The primary structure comprises 240 residues: Heme oxygenase 1 (240 aa).

Positions 10, 17, 125, 168, and 172 each coordinate heme b.

Belongs to the heme oxygenase family.

It carries out the reaction heme b + 3 reduced [NADPH--hemoprotein reductase] + 3 O2 = biliverdin IXalpha + CO + Fe(2+) + 3 oxidized [NADPH--hemoprotein reductase] + 3 H2O + H(+). Catalyzes the opening of the heme ring with the release of iron. Key enzyme in the synthesis of the chromophoric part of the photosynthetic antennae. The polypeptide is Heme oxygenase 1 (pbsA1) (Synechocystis sp. (strain ATCC 27184 / PCC 6803 / Kazusa)).